Consider the following 343-residue polypeptide: Twinfilin (343 aa).

ADF-H domains lie at 4-139 (QTGI…KHKV) and 177-312 (GINC…EELH). The tract at residues 314–343 (RKLNLRPQFSKPKGPPSRGAKRLTKPQAVE) is disordered.

The protein belongs to the actin-binding proteins ADF family. Twinfilin subfamily. In terms of assembly, interacts with G-actin; ADP-actin form.

It is found in the cytoplasm. Its subcellular location is the cytoskeleton. It localises to the cell cortex. Functionally, actin-binding protein involved in motile and morphological processes. Inhibits actin polymerization, likely by sequestering G-actin. The polypeptide is Twinfilin (twf) (Anopheles gambiae (African malaria mosquito)).